Consider the following 756-residue polypeptide: LIM domain and actin-binding protein 1 (756 aa).

At Met1 the chain carries N-acetylmethionine. Ser15 and Ser55 each carry phosphoserine. Basic and acidic residues predominate over residues 44–56 (AAEEANMEKRRSN). Disordered regions lie at residues 44–183 (AAEE…SNKI) and 204–377 (QTKI…AVKK). Residues 107-118 (EVASSSASGVEA) show a composition bias toward low complexity. Ser130 bears the Phosphoserine mark. Over residues 140-173 (RIKDTEHLKDHSAESKKMENCLAESRHEVGKPET) the composition is skewed to basic and acidic residues. Positions 164–166 (SRH) match the Required for interaction with NPC1L1 motif. Ser221 is modified (phosphoserine). Tyr225 bears the Phosphotyrosine mark. Ser226 and Ser238 each carry phosphoserine. Residues 245–254 (EKSESRRNLE) are compositionally biased toward basic and acidic residues. The residue at position 259 (Ser259) is a Phosphoserine. Residues 274–287 (VSKQSSSTNYTNEL) show a composition bias toward polar residues. Basic and acidic residues predominate over residues 294-303 (IKTHKLEQKE). Residues Ser339, Ser346, Ser358, Ser365, and Ser370 each carry the phosphoserine modification. Residues 384 to 444 (ETCVECQKTV…KPHFNQLFKS (61 aa)) form the LIM zinc-binding domain. Position 435 is an N6-succinyllysine (Lys435). Phosphoserine is present on Ser486. The interval 489 to 509 (VEDAPIAKVGVLTASMEAKAS) is required for interaction with MYO5B. Residues 508–726 (ASSQLEKEDK…TTQKQKSQDV (219 aa)) form a disordered region. The segment covering 512–523 (LEKEDKPAETKK) has biased composition (basic and acidic residues). Residues 533 to 542 (ELSSSGSALE) show a composition bias toward low complexity. Residues 552 to 563 (WPPEDEVSKPEA) are compositionally biased toward basic and acidic residues. Residues Ser597, Ser600, Ser605, and Ser613 each carry the phosphoserine modification. Over residues 627 to 637 (AERKQMEKASA) the composition is skewed to basic and acidic residues. Over residues 638 to 651 (SEKNGSVGKTTWPS) the composition is skewed to polar residues. The segment covering 652–667 (KESRGGEAAGRSKEVQ) has biased composition (basic and acidic residues). A compositionally biased stretch (polar residues) spans 691–721 (LQQQSPLEPKSKNWSSFADNTSAKEFTTQKQ). Phosphoserine is present on residues Ser695, Ser723, and Ser738.

As to quaternary structure, interacts with NPC1L1; bridges NPC1L1 with MYO5B. Interacts with MYO5B; bridges MYO5B with NPC1L1. Interacts with PXN; this complex stabilizes actin dynamics. Interacts with F-actin and G-actin. Interacts with LUZP1 (via C-terminus); both proteins restrict ciliation and may work together to regulate this process. Binds RAB40B (GTP-bound); interaction influences LIMA1 subcellular localization in lamellipodia during cell migration. Phosphorylation of the C-terminal region by MAPK1/MAPK3 reduces its association with F-actin and contributes to actin filament reorganization and enhances cell motility. In terms of processing, ubiquitinated by the ECS(RAB40B) complex leading to its degradation. As to expression, widely expressed. Highest levels of isoform 2 are expressed in lung, spleen and small intestine. Isoform 2 is expressed at higher levels than isoform 1 in most tissues except liver, fat and kidney. Isoform 1 and isoform 2 are expressed at low levels in skeletal muscle, heart, stomach and lymph.

It is found in the cytoplasm. Its subcellular location is the cell junction. The protein localises to the focal adhesion. The protein resides in the cytoskeleton. It localises to the stress fiber. It is found in the cell membrane. Its subcellular location is the cell projection. The protein localises to the ruffle. The protein resides in the lamellipodium. In terms of biological role, actin-binding protein involved in actin cytoskeleton regulation and dynamics. Increases the number and size of actin stress fibers and inhibits membrane ruffling. Inhibits actin filament depolymerization. Bundles actin filaments, delays filament nucleation and reduces formation of branched filaments. Acts as a negative regulator of primary cilium formation. Plays a role in cholesterol homeostasis. Influences plasma cholesterol levels through regulation of intestinal cholesterol absorption. May act as a scaffold protein by regulating NPC1L1 transportation, an essential protein for cholesterol absorption, to the plasma membrane by recruiting MYO5B to NPC1L1, and thus facilitates cholesterol uptake. The chain is LIM domain and actin-binding protein 1 from Sus scrofa (Pig).